Consider the following 562-residue polypeptide: Arylsulfatase H (562 aa).

Residues aspartate 15, aspartate 16, and cysteine 55 each contribute to the Ca(2+) site. Cysteine 55 acts as the Nucleophile in catalysis. Cysteine 55 is modified (3-oxoalanine (Cys)). A substrate-binding site is contributed by lysine 115. Histidine 117 is an active-site residue. The next 2 membrane-spanning stretches (helical) occupy residues 167–187 and 189–209; these read LWISTVALALVPFLLLIPKFA and WFSVPWKVIFVFALLAFLFFT. Residue histidine 271 participates in substrate binding. Ca(2+)-binding residues include aspartate 323 and asparagine 324. Residue lysine 348 participates in substrate binding.

The protein belongs to the sulfatase family. It depends on Ca(2+) as a cofactor. In terms of processing, the conversion to 3-oxoalanine (also known as C-formylglycine, FGly), of a serine or cysteine residue in prokaryotes and of a cysteine residue in eukaryotes, is critical for catalytic activity.

It localises to the membrane. The polypeptide is Arylsulfatase H (ARSH) (Homo sapiens (Human)).